The chain runs to 244 residues: uncharacterized protein (244 aa).

Transmembrane regions (helical) follow at residues 21 to 41 (FPYSVPMIAGFLFLGIAYGIY), 44 to 64 (ALGFGFLYPTLMALLIYAGSV), 66 to 86 (FIAAGALIAPFSPISVLLITL), 139 to 159 (WYMFFVSLYLHIYWVLGAAMG), 165 to 185 (VLPFNLKGVEFSMTALFLVIF), and 199 to 219 (LLGLGIALVFLLIIGKEYFLI).

This sequence belongs to the AzlC family.

It is found in the cell membrane. This is an uncharacterized protein from Haemophilus influenzae (strain ATCC 51907 / DSM 11121 / KW20 / Rd).